The following is a 511-amino-acid chain: Acidic amino acid decarboxylase GADL1 (511 aa).

Residue Lys-323 is modified to N6-(pyridoxal phosphate)lysine.

Belongs to the group II decarboxylase family. Homodimer. Pyridoxal 5'-phosphate is required as a cofactor.

The catalysed reaction is L-aspartate + H(+) = beta-alanine + CO2. It catalyses the reaction 3-sulfino-L-alanine + H(+) = hypotaurine + CO2. Catalyzes the decarboxylation of L-aspartate, 3-sulfino-L-alanine (cysteine sulfinic acid), and L-cysteate to beta-alanine, hypotaurine and taurine, respectively. The preferred substrate is L-aspartate. Does not exhibit any decarboxylation activity toward glutamate. This Xenopus tropicalis (Western clawed frog) protein is Acidic amino acid decarboxylase GADL1 (gadl1).